The primary structure comprises 320 residues: Peroxidase 66 (320 aa).

The signal sequence occupies residues 1–29; it reads MAASVSASCLNRLSSLAVVLVALASAASA. Pyrrolidone carboxylic acid is present on Q30. Intrachain disulfides connect C40/C118, C73/C78, C124/C315, and C202/C227. Catalysis depends on H71, which acts as the Proton acceptor. Ca(2+)-binding residues include D72, V75, G77, D79, and S81. Residues N85 and N96 are each glycosylated (N-linked (GlcNAc...) asparagine). Residue P165 coordinates substrate. Residue H195 participates in heme b binding. T196 is a Ca(2+) binding site. The N-linked (GlcNAc...) asparagine glycan is linked to N211. Ca(2+) contacts are provided by D239, T242, and D247.

It belongs to the peroxidase family. Classical plant (class III) peroxidase subfamily. It depends on heme b as a cofactor. Ca(2+) serves as cofactor.

The protein resides in the secreted. It carries out the reaction 2 a phenolic donor + H2O2 = 2 a phenolic radical donor + 2 H2O. Its function is as follows. Removal of H(2)O(2), oxidation of toxic reductants, biosynthesis and degradation of lignin, suberization, auxin catabolism, response to environmental stresses such as wounding, pathogen attack and oxidative stress. These functions might be dependent on each isozyme/isoform in each plant tissue. The protein is Peroxidase 66 (PER66) of Zea mays (Maize).